A 1690-amino-acid chain; its full sequence is DNA-directed RNA polymerase subunit beta' (1690 aa).

Cysteine 63, cysteine 65, cysteine 78, and cysteine 81 together coordinate Zn(2+). 3 residues coordinate Mg(2+): aspartate 753, aspartate 755, and aspartate 757. Residues cysteine 1107, cysteine 1295, cysteine 1302, and cysteine 1305 each contribute to the Zn(2+) site.

It belongs to the RNA polymerase beta' chain family. As to quaternary structure, the RNAP catalytic core consists of 2 alpha, 1 beta, 1 beta' and 1 omega subunit. When a sigma factor is associated with the core the holoenzyme is formed, which can initiate transcription. The cofactor is Mg(2+). Zn(2+) is required as a cofactor.

It catalyses the reaction RNA(n) + a ribonucleoside 5'-triphosphate = RNA(n+1) + diphosphate. DNA-dependent RNA polymerase catalyzes the transcription of DNA into RNA using the four ribonucleoside triphosphates as substrates. The chain is DNA-directed RNA polymerase subunit beta' from Thermotoga sp. (strain RQ2).